The primary structure comprises 244 residues: Small ribosomal subunit protein uS2 (244 aa).

Belongs to the universal ribosomal protein uS2 family.

This Desulforudis audaxviator (strain MP104C) protein is Small ribosomal subunit protein uS2.